The following is a 278-amino-acid chain: Digeranylgeranylglyceryl phosphate synthase (278 aa).

8 consecutive transmembrane segments (helical) span residues 12–32, 34–54, 92–112, 129–149, 153–173, 204–224, 226–246, and 257–277; these read LKNCLTASFGAFIGGLIASYF, LAMVDNLILASIVVFLVCGFG, LVVMGLFISLFNISCFLMAVL, IIGNLIVAYLTGSVFIFGGIA, IDVTIMLFLCALFAMWSREII, FLLIFAIFLSPLPYLFGFFGI, YMISVVFCDLLFLFGIYKLVF, and SRNIKIVTNLVLIAFLIGSLF.

Belongs to the UbiA prenyltransferase family. DGGGP synthase subfamily. Requires Mg(2+) as cofactor.

Its subcellular location is the cell membrane. It carries out the reaction sn-3-O-(geranylgeranyl)glycerol 1-phosphate + (2E,6E,10E)-geranylgeranyl diphosphate = 2,3-bis-O-(geranylgeranyl)-sn-glycerol 1-phosphate + diphosphate. Its pathway is membrane lipid metabolism; glycerophospholipid metabolism. In terms of biological role, prenyltransferase that catalyzes the transfer of the geranylgeranyl moiety of geranylgeranyl diphosphate (GGPP) to the C2 hydroxyl of (S)-3-O-geranylgeranylglyceryl phosphate (GGGP). This reaction is the second ether-bond-formation step in the biosynthesis of archaeal membrane lipids. The protein is Digeranylgeranylglyceryl phosphate synthase of Methanococcus maripaludis (strain DSM 14266 / JCM 13030 / NBRC 101832 / S2 / LL).